Reading from the N-terminus, the 478-residue chain is tRNA (adenine(58)-N(1))-methyltransferase non-catalytic subunit TRM6 (478 aa).

Residues 456–478 form a disordered region; it reads SENATAADSSEKLAEHGAKKQKI. A compositionally biased stretch (basic and acidic residues) spans 464–478; sequence SSEKLAEHGAKKQKI.

The protein belongs to the TRM6/GCD10 family. As to quaternary structure, heterotetramer; composed of two copies of TRM6/GCD10 and two copies of TRM61/GCD14.

It is found in the nucleus. Functionally, substrate-binding subunit of tRNA (adenine-N(1)-)-methyltransferase, which catalyzes the formation of N(1)-methyladenine at position 58 (m1A58) in initiator methionyl-tRNA. Also required for repression of GCN4 mRNA translation by the upstream open reading frames (uORFs) under conditions of amino acid sufficiency. In Saccharomyces cerevisiae (strain ATCC 204508 / S288c) (Baker's yeast), this protein is tRNA (adenine(58)-N(1))-methyltransferase non-catalytic subunit TRM6 (GCD10).